The following is a 490-amino-acid chain: Chromosomal replication initiator protein DnaA (490 aa).

The interval 1 to 91 (MTMKGGVASQ…GELWAAHDAT (91 aa)) is domain I, interacts with DnaA modulators. The interval 91–147 (TGRRIDLKSRLEFEAAAGAYVEATPKAVAAEPIEIVLPVSTDAPTVVAPSAKSPRTQ) is domain II. The interval 148-370 (GLQERFTFET…GALNTLSARA (223 aa)) is domain III, AAA+ region. ATP-binding residues include G192, G194, K195, and T196. A domain IV, binds dsDNA region spans residues 371–490 (GEGLSRMTLD…LETLTRKLRG (120 aa)).

This sequence belongs to the DnaA family. In terms of assembly, oligomerizes as a right-handed, spiral filament on DNA at oriC.

It is found in the cytoplasm. In terms of biological role, plays an essential role in the initiation and regulation of chromosomal replication. ATP-DnaA binds to the origin of replication (oriC) to initiate formation of the DNA replication initiation complex once per cell cycle. Binds the DnaA box (a 9 base pair repeat at the origin) and separates the double-stranded (ds)DNA. Forms a right-handed helical filament on oriC DNA; dsDNA binds to the exterior of the filament while single-stranded (ss)DNA is stabiized in the filament's interior. The ATP-DnaA-oriC complex binds and stabilizes one strand of the AT-rich DNA unwinding element (DUE), permitting loading of DNA polymerase. After initiation quickly degrades to an ADP-DnaA complex that is not apt for DNA replication. Binds acidic phospholipids. In Caulobacter vibrioides (strain ATCC 19089 / CIP 103742 / CB 15) (Caulobacter crescentus), this protein is Chromosomal replication initiator protein DnaA.